Consider the following 523-residue polypeptide: MVHWADYIADKIIRERGEKEKYVVESGITPSGYVHVGNFRELFTAYIVGHALRDKGYEVRHIHMWDDYDRFRKVPRNVPQEWKDYLGMPISEVPDPWGCHESYAEHFMRKFEEEVEKLGIEVDFLYASELYKRGEYSEEIRLAFEKRDKIMEILNKYREIAKQPPLPENWWPAMVYCPEHRREAEIIEWDGGWKVKYKCPEGHEGWVDIRSGNVKLRWRVDWPMRWSHFGVDFEPAGKDHLVAGSSYDTGKEIIKEVYGKEAPLSLMYEFVGIKGQKGKMSGSKGNVILLSDLYEVLEPGLVRFIYARHRPNKEIKIDLGLGILNLYDEFDKVERIYFGVEGGKGDDEELRRTYELSMPKKPERLVAQAPFRFLAVLVQLPHLTEEDIINVLIKQGHIPRDLSKEDVERVKLRINLARNWVKKYAPEDVKFSILEKPPEVEVSEDVREAMNEVAEWLENHEEFSVEEFNNILFEVAKRRGISSREWFSTLYRLFIGKERGPRLASFLASLDRSFVIKRLRLEG.

The 'HIGH' region motif lies at 30–38; the sequence is PSGYVHVGN. Residues D95, C99, H100, H106, C177, H180, C199, and H203 each coordinate Zn(2+). The 'KMSKS' region signature appears at 279-283; sequence KMSGS.

Belongs to the class-I aminoacyl-tRNA synthetase family. It depends on Zn(2+) as a cofactor.

The protein localises to the cytoplasm. It carries out the reaction tRNA(Lys) + L-lysine + ATP = L-lysyl-tRNA(Lys) + AMP + diphosphate. The protein is Lysine--tRNA ligase (lysS) of Pyrococcus horikoshii (strain ATCC 700860 / DSM 12428 / JCM 9974 / NBRC 100139 / OT-3).